Consider the following 941-residue polypeptide: Protein BREAST CANCER SUSCEPTIBILITY 1 homolog (941 aa).

The RING-type zinc-finger motif lies at cysteine 16–lysine 54. 2 disordered regions span residues phenylalanine 87–serine 282 and lysine 303–aspartate 528. Composition is skewed to basic and acidic residues over residues serine 96–arginine 115 and lysine 125–aspartate 136. Residues leucine 157–valine 173 are compositionally biased toward polar residues. The span at threonine 175 to leucine 196 shows a compositional bias: basic and acidic residues. The segment covering asparagine 216–serine 236 has biased composition (polar residues). Basic and acidic residues predominate over residues aspartate 242–glutamine 255. The Nuclear localization signal 1 signature appears at glutamine 298–lysine 305. Composition is skewed to polar residues over residues glycine 329–isoleucine 357 and serine 376–asparagine 391. Basic and acidic residues-rich tracts occupy residues glycine 428–serine 453 and lysine 477–serine 487. A Nuclear localization signal 2 motif is present at residues glutamate 444–lysine 451. Residues methionine 489–histidine 498 are compositionally biased toward polar residues. The span at aspartate 512–aspartate 528 shows a compositional bias: basic and acidic residues. The C2HC pre-PHD-type zinc finger occupies lysine 561–valine 612. A PHD-type; degenerate zinc finger spans residues isoleucine 632–alanine 681. BRCT domains lie at lysine 724–isoleucine 819 and lysine 840–isoleucine 941.

In terms of assembly, forms heterodimer with BARD1/ROW1. As to expression, expressed ubiquitously with highest levels in flower buds. Mostly expressed in flowers and siliques, and, to a lower extent, in roots, rosette leaves, inflorescence and young cauline leaves.

The protein resides in the nucleus. Functionally, plays a role in DNA repair and in cell-cycle control. Required for the repair of DNA double-strand breaks (DSBs), both natural and induced by genotoxic stress, by homologous recombination (HR). The polypeptide is Protein BREAST CANCER SUSCEPTIBILITY 1 homolog (Arabidopsis thaliana (Mouse-ear cress)).